A 1368-amino-acid polypeptide reads, in one-letter code: DNA-directed RNA polymerase subunit beta (1368 aa).

The protein belongs to the RNA polymerase beta chain family. The RNAP catalytic core consists of 2 alpha, 1 beta, 1 beta' and 1 omega subunit. When a sigma factor is associated with the core the holoenzyme is formed, which can initiate transcription.

It carries out the reaction RNA(n) + a ribonucleoside 5'-triphosphate = RNA(n+1) + diphosphate. Functionally, DNA-dependent RNA polymerase catalyzes the transcription of DNA into RNA using the four ribonucleoside triphosphates as substrates. This is DNA-directed RNA polymerase subunit beta from Cupriavidus taiwanensis (strain DSM 17343 / BCRC 17206 / CCUG 44338 / CIP 107171 / LMG 19424 / R1) (Ralstonia taiwanensis (strain LMG 19424)).